We begin with the raw amino-acid sequence, 290 residues long: uncharacterized protein (290 aa).

The next 6 helical transmembrane spans lie at 71–91, 124–144, 155–175, 202–222, 234–254, and 262–282; these read FWSF…VKNI, GILI…LPGM, IIIG…YILV, FILV…LQLV, MFSI…VLTP, and ILLS…VLVV.

This sequence belongs to the TatC family.

It localises to the plastid. It is found in the chloroplast membrane. This is an uncharacterized protein from Guillardia theta (Cryptophyte).